The following is a 414-amino-acid chain: Ribulose bisphosphate carboxylase large chain (414 aa).

Residues Asn-100 and Thr-150 each contribute to the substrate site. Lys-152 (proton acceptor) is an active-site residue. Residue Lys-154 coordinates substrate. Mg(2+) is bound by residues Lys-178, Asp-180, and Glu-181. Position 178 is an N6-carboxylysine (Lys-178). His-271 (proton acceptor) is an active-site residue. Substrate-binding residues include Arg-272, His-304, and Ser-356.

Belongs to the RuBisCO large chain family. Type I subfamily. Heterohexadecamer of 8 large chains and 8 small chains; disulfide-linked. The disulfide link is formed within the large subunit homodimers. The cofactor is Mg(2+). The disulfide bond which can form in the large chain dimeric partners within the hexadecamer appears to be associated with oxidative stress and protein turnover.

Its subcellular location is the plastid. It localises to the chloroplast. It carries out the reaction 2 (2R)-3-phosphoglycerate + 2 H(+) = D-ribulose 1,5-bisphosphate + CO2 + H2O. The enzyme catalyses D-ribulose 1,5-bisphosphate + O2 = 2-phosphoglycolate + (2R)-3-phosphoglycerate + 2 H(+). Functionally, ruBisCO catalyzes two reactions: the carboxylation of D-ribulose 1,5-bisphosphate, the primary event in carbon dioxide fixation, as well as the oxidative fragmentation of the pentose substrate in the photorespiration process. Both reactions occur simultaneously and in competition at the same active site. The chain is Ribulose bisphosphate carboxylase large chain (rbcL) from Blechnopsis orientalis (Fish fern).